Reading from the N-terminus, the 255-residue chain is Venom allergen-1 (255 aa).

A signal peptide spans 1 to 21 (MASHVIVKFITAAILIGSCYA). An SCP domain is found at 65–210 (LKKHNELRAE…VIKYYLVCNY (146 aa)). Asn146 and Asn209 each carry an N-linked (GlcNAc...) asparagine glycan.

This sequence belongs to the CRISP family. As to quaternary structure, interacts with human LRPPRC; the interaction interrupts association between BECN1 and LRPPRC. Interacts with human CD4. (Microbial infection) Interacts with Zika virus envelope protein E and Zika virus-like particles; the interaction does not affect Zika virus replication in human endothelial cells and keratinocytes. Saliva (at protein level). Female salivary gland. No or low-level expression in female hemolymph, midgut, Malpighian tubule system and ovary. No or low-level expression in male tissues.

The protein resides in the secreted. It localises to the host endosome. The protein localises to the host mitochondrion. Its function is as follows. Activates autophagy in human monocytic cells, dendritic cells and macrophages. Promotes activation of human CD4(+) T-cells. Does not affect cytokine expression in human monocytic cells. Functionally, (Microbial infection) Promotes dengue virus type 2 replication in human monocytic cells, dendritic cells and macrophages. Pro-viral properties are linked to BECN1-mediated autophagy activation in the host. Does not directly interact with the purified envelope protein of dengue virus type 2. In terms of biological role, (Microbial infection) Promotes Zika virus replication in human monocytic cells, dendritic cells and macrophages. Facilitates Zika virus transmission from infected mosquitoes to the host in mouse model. Pro-viral properties are linked to BECN1-mediated autophagy activation in the host. Does not affect Zika virus replication in human endothelial cells and keratinocytes. (Microbial infection) Promotes Semliki Forest virus replication in human monocytic cells. Its function is as follows. (Microbial infection) Does not influence Batai virus replication in human monocytic cells. The polypeptide is Venom allergen-1 (Aedes aegypti (Yellowfever mosquito)).